The primary structure comprises 602 residues: Elongation factor 4 (602 aa).

A tr-type G domain is found at 2–184 (NHIRNFSIIA…AVVAKVPPPK (183 aa)). GTP contacts are provided by residues 14–19 (DHGKST) and 131–134 (NKMD).

It belongs to the TRAFAC class translation factor GTPase superfamily. Classic translation factor GTPase family. LepA subfamily.

It localises to the cell inner membrane. The enzyme catalyses GTP + H2O = GDP + phosphate + H(+). In terms of biological role, required for accurate and efficient protein synthesis under certain stress conditions. May act as a fidelity factor of the translation reaction, by catalyzing a one-codon backward translocation of tRNAs on improperly translocated ribosomes. Back-translocation proceeds from a post-translocation (POST) complex to a pre-translocation (PRE) complex, thus giving elongation factor G a second chance to translocate the tRNAs correctly. Binds to ribosomes in a GTP-dependent manner. The chain is Elongation factor 4 from Delftia acidovorans (strain DSM 14801 / SPH-1).